Reading from the N-terminus, the 232-residue chain is Lipoprotein-releasing system ATP-binding protein LolD (232 aa).

Positions 11 to 232 (IEVTDLQRAF…LHDGRLIEEY (222 aa)) constitute an ABC transporter domain. 47 to 54 (GPSGAGKS) lines the ATP pocket.

The protein belongs to the ABC transporter superfamily. Lipoprotein translocase (TC 3.A.1.125) family. As to quaternary structure, the complex is composed of two ATP-binding proteins (LolD) and two transmembrane proteins (LolC and LolE).

The protein localises to the cell inner membrane. Part of the ABC transporter complex LolCDE involved in the translocation of mature outer membrane-directed lipoproteins, from the inner membrane to the periplasmic chaperone, LolA. Responsible for the formation of the LolA-lipoprotein complex in an ATP-dependent manner. This is Lipoprotein-releasing system ATP-binding protein LolD from Zymomonas mobilis subsp. mobilis (strain ATCC 31821 / ZM4 / CP4).